Reading from the N-terminus, the 111-residue chain is uncharacterized protein (111 aa).

This is an uncharacterized protein from Schizosaccharomyces pombe (strain 972 / ATCC 24843) (Fission yeast).